A 331-amino-acid polypeptide reads, in one-letter code: D/L-glyceraldehyde reductase (331 aa).

Catalysis depends on Y51, which acts as the Proton donor. H114 provides a ligand contact to substrate. Residue S213 to N276 coordinates NADP(+).

The protein belongs to the aldo/keto reductase family.

The catalysed reaction is glycerol + NADP(+) = L-glyceraldehyde + NADPH + H(+). The enzyme catalyses glycerol + NADP(+) = D-glyceraldehyde + NADPH + H(+). Its pathway is carbohydrate acid metabolism. Its function is as follows. Mediates the conversion of L-glyceraldehyde to glycerol in D-galacturonate catabolic process. Also able to reduce D-glyceraldehyde. In Hypocrea jecorina (Trichoderma reesei), this protein is D/L-glyceraldehyde reductase (gld1).